The following is a 444-amino-acid chain: Phosphoglucosamine mutase (444 aa).

The active-site Phosphoserine intermediate is the serine 101. Mg(2+)-binding residues include serine 101, aspartate 240, aspartate 242, and aspartate 244. Phosphoserine is present on serine 101.

Belongs to the phosphohexose mutase family. Requires Mg(2+) as cofactor. Post-translationally, activated by phosphorylation.

The enzyme catalyses alpha-D-glucosamine 1-phosphate = D-glucosamine 6-phosphate. In terms of biological role, catalyzes the conversion of glucosamine-6-phosphate to glucosamine-1-phosphate. The polypeptide is Phosphoglucosamine mutase (Sphingopyxis alaskensis (strain DSM 13593 / LMG 18877 / RB2256) (Sphingomonas alaskensis)).